The following is a 281-amino-acid chain: Probable short-chain type dehydrogenase/reductase blr2146 (281 aa).

10 to 34 contributes to the NAD(+) binding site; the sequence is VVTGAGAGIGKACALAIAREGGRVV. S146 is a substrate binding site. Y159 acts as the Proton acceptor in catalysis. Residues 261–281 are disordered; it reads GNSRAARPAGETAEADAAPRC.

The protein belongs to the short-chain dehydrogenases/reductases (SDR) family.

In Bradyrhizobium diazoefficiens (strain JCM 10833 / BCRC 13528 / IAM 13628 / NBRC 14792 / USDA 110), this protein is Probable short-chain type dehydrogenase/reductase blr2146.